Here is a 182-residue protein sequence, read N- to C-terminus: Translation initiation factor IF-3, chloroplastic (182 aa).

The protein belongs to the IF-3 family. In terms of assembly, monomer.

It localises to the plastid. The protein resides in the chloroplast. In terms of biological role, IF-3 binds to the 30S ribosomal subunit and shifts the equilibrium between 70S ribosomes and their 50S and 30S subunits in favor of the free subunits, thus enhancing the availability of 30S subunits on which protein synthesis initiation begins. This Porphyra purpurea (Red seaweed) protein is Translation initiation factor IF-3, chloroplastic.